Here is a 679-residue protein sequence, read N- to C-terminus: DNA-directed RNA polymerase subunit beta' (679 aa).

Cys-69, Cys-71, Cys-87, and Cys-90 together coordinate Zn(2+). Residues Asp-489, Asp-491, and Asp-493 each contribute to the Mg(2+) site.

The protein belongs to the RNA polymerase beta' chain family. RpoC1 subfamily. In plastids the minimal PEP RNA polymerase catalytic core is composed of four subunits: alpha, beta, beta', and beta''. When a (nuclear-encoded) sigma factor is associated with the core the holoenzyme is formed, which can initiate transcription. Mg(2+) is required as a cofactor. It depends on Zn(2+) as a cofactor.

It is found in the plastid. Its subcellular location is the chloroplast. It carries out the reaction RNA(n) + a ribonucleoside 5'-triphosphate = RNA(n+1) + diphosphate. Functionally, DNA-dependent RNA polymerase catalyzes the transcription of DNA into RNA using the four ribonucleoside triphosphates as substrates. This chain is DNA-directed RNA polymerase subunit beta', found in Phalaenopsis aphrodite subsp. formosana (Moth orchid).